The primary structure comprises 382 residues: Homoserine O-succinyltransferase (382 aa).

The AB hydrolase-1 domain occupies 51–359 (NAILVCHALS…EATQGHDAFL (309 aa)). Ser-157 serves as the catalytic Nucleophile. Arg-227 is a substrate binding site. Residues Asp-322 and His-355 contribute to the active site. Residue Asp-356 participates in substrate binding.

This sequence belongs to the AB hydrolase superfamily. MetX family. As to quaternary structure, homodimer.

The protein resides in the cytoplasm. The enzyme catalyses L-homoserine + succinyl-CoA = O-succinyl-L-homoserine + CoA. It participates in amino-acid biosynthesis; L-methionine biosynthesis via de novo pathway; O-succinyl-L-homoserine from L-homoserine: step 1/1. Functionally, transfers a succinyl group from succinyl-CoA to L-homoserine, forming succinyl-L-homoserine. The polypeptide is Homoserine O-succinyltransferase (Halorhodospira halophila (strain DSM 244 / SL1) (Ectothiorhodospira halophila (strain DSM 244 / SL1))).